Here is a 241-residue protein sequence, read N- to C-terminus: Phosphoadenosine 5'-phosphosulfate reductase (241 aa).

Residue Cys235 is the Nucleophile; cysteine thiosulfonate intermediate of the active site.

This sequence belongs to the PAPS reductase family. CysH subfamily.

It localises to the cytoplasm. The catalysed reaction is [thioredoxin]-disulfide + sulfite + adenosine 3',5'-bisphosphate + 2 H(+) = [thioredoxin]-dithiol + 3'-phosphoadenylyl sulfate. Its pathway is sulfur metabolism; hydrogen sulfide biosynthesis; sulfite from sulfate: step 3/3. Functionally, catalyzes the formation of sulfite from phosphoadenosine 5'-phosphosulfate (PAPS) using thioredoxin as an electron donor. The polypeptide is Phosphoadenosine 5'-phosphosulfate reductase (Xanthomonas euvesicatoria pv. vesicatoria (strain 85-10) (Xanthomonas campestris pv. vesicatoria)).